Consider the following 323-residue polypeptide: Mas-related G-protein coupled receptor member X1 (323 aa).

The Extracellular portion of the chain corresponds to 1–30 (MDPTISSLSTESTTLNKTGHPSCRPILTLS). The N-linked (GlcNAc...) asparagine glycan is linked to Asn-16. The helical transmembrane segment at 31–51 (FLVPIITLLGLAGNTIVLWLL) threads the bilayer. Residues 52 to 59 (GFRMRRKA) lie on the Cytoplasmic side of the membrane. A helical transmembrane segment spans residues 60-80 (ISVYVLNLSLADSFFLCCHFI). The Extracellular portion of the chain corresponds to 81–100 (DSLMRIMNFYGIYAHKLSKE). Residues 101–121 (ILGNAAIIPYISGLSILSAIS) traverse the membrane as a helical segment. Residues 122-143 (TERCLSVLWPIWYHCHRPRNMS) are Cytoplasmic-facing. Residues 144 to 164 (AIICVLIWVLSFLMGILDWFF) traverse the membrane as a helical segment. The Extracellular segment spans residues 165–180 (SGFLGETHHHLWKNVD). A helical transmembrane segment spans residues 181-201 (FIVTAFLIFLFMLLFGSSLAL). The Cytoplasmic segment spans residues 202 to 226 (LVRILCGSRRKPLSRLYVTISLTVM). Residues 227–247 (VYLICGLPLGLYLFLLYWFGI) form a helical membrane-spanning segment. Residues 248–258 (HLHYPFCHIYQ) lie on the Extracellular side of the membrane. A helical membrane pass occupies residues 259-279 (VTVLLSCVNSSANPIIYFLVG). Over 280-323 (SFRHRKKHRSLKMVLKRALEETPEEDEYTDSHVQKPTEISERRC) the chain is Cytoplasmic.

It belongs to the G-protein coupled receptor 1 family. Mas subfamily. Uniquely localized in a subset of small dorsal root and trigeminal sensory neurons. Associated preferentially with IB4 class of small-diameter somatosensory afferents (also known as nociceptors).

The protein resides in the cell membrane. Functionally, orphan receptor activated by neuropeptides terminating in Arg-Phe or Arg-Phe-amide. Mediates its action by association with G proteins that activate a phosphatidylinositol-calcium second messenger system. Its effect is mediated by G(q) and G(11) proteins. May regulate the function of nociceptive neurons by modulation of pain perception. This chain is Mas-related G-protein coupled receptor member X1 (Mrgprx1), found in Rattus norvegicus (Rat).